We begin with the raw amino-acid sequence, 371 residues long: tRNA-specific 2-thiouridylase MnmA (371 aa).

ATP contacts are provided by residues 13 to 20 (GMSGGVDS) and Met39. The interval 99–101 (NPD) is interaction with target base in tRNA. Cys104 serves as the catalytic Nucleophile. Cysteines 104 and 200 form a disulfide. Gly128 provides a ligand contact to ATP. An interaction with tRNA region spans residues 150-152 (KDQ). Cys200 acts as the Cysteine persulfide intermediate in catalysis. The interaction with tRNA stretch occupies residues 308 to 309 (RY).

Belongs to the MnmA/TRMU family.

Its subcellular location is the cytoplasm. The catalysed reaction is S-sulfanyl-L-cysteinyl-[protein] + uridine(34) in tRNA + AH2 + ATP = 2-thiouridine(34) in tRNA + L-cysteinyl-[protein] + A + AMP + diphosphate + H(+). Its function is as follows. Catalyzes the 2-thiolation of uridine at the wobble position (U34) of tRNA, leading to the formation of s(2)U34. The chain is tRNA-specific 2-thiouridylase MnmA from Listeria welshimeri serovar 6b (strain ATCC 35897 / DSM 20650 / CCUG 15529 / CIP 8149 / NCTC 11857 / SLCC 5334 / V8).